Consider the following 309-residue polypeptide: GTP cyclohydrolase FolE2 (309 aa).

This sequence belongs to the GTP cyclohydrolase IV family.

It carries out the reaction GTP + H2O = 7,8-dihydroneopterin 3'-triphosphate + formate + H(+). The protein operates within cofactor biosynthesis; 7,8-dihydroneopterin triphosphate biosynthesis; 7,8-dihydroneopterin triphosphate from GTP: step 1/1. In terms of biological role, converts GTP to 7,8-dihydroneopterin triphosphate. This chain is GTP cyclohydrolase FolE2, found in Serratia proteamaculans (strain 568).